Here is a 131-residue protein sequence, read N- to C-terminus: Cystatin-like cysteine protease inhibitor EPIC3 (131 aa).

An N-terminal signal peptide occupies residues 1 to 22 (MAFTRSIALFAGLALAASSAQG). A glycan (N-linked (GlcNAc...) asparagine) is linked at N33. A Secondary area of contact motif is present at residues 71 to 75 (QTVAG).

Belongs to the cystatin family.

The protein localises to the secreted. Functionally, secreted effector that interacts with and inhibits host apoplastic pathogenesis-related papain-like cysteine proteases. Inhibition of host proteases by a pathogen extracellular protease inhibitor forms a specific type of defense-counterdefense mechanism between plants and microbial pathogens. The chain is Cystatin-like cysteine protease inhibitor EPIC3 from Phytophthora infestans (strain T30-4) (Potato late blight agent).